Consider the following 329-residue polypeptide: MYG1 protein (329 aa).

Belongs to the MYG1 family.

This chain is MYG1 protein, found in Dictyostelium discoideum (Social amoeba).